Reading from the N-terminus, the 232-residue chain is Chaperone protein CssC (232 aa).

The N-terminal stretch at 1–20 (MKSKLIILLMLVPFSSFSTE) is a signal peptide.

It belongs to the periplasmic pilus chaperone family.

It is found in the periplasm. Involved in the biogenesis of the CS6 fimbria. This is Chaperone protein CssC (cssC) from Escherichia coli.